We begin with the raw amino-acid sequence, 215 residues long: Chaperone protein TorD (215 aa).

It belongs to the TorD/DmsD family. TorD subfamily.

The protein localises to the cytoplasm. In terms of biological role, involved in the biogenesis of TorA. Acts on TorA before the insertion of the molybdenum cofactor and, as a result, probably favors a conformation of the apoenzyme that is competent for acquiring the cofactor. This is Chaperone protein TorD from Aliivibrio fischeri (strain ATCC 700601 / ES114) (Vibrio fischeri).